Consider the following 263-residue polypeptide: Isoprenyl transferase (263 aa).

Asp26 is an active-site residue. Residue Asp26 coordinates Mg(2+). Substrate-binding positions include Gly27–Arg30, Trp31, Arg39, His43, and Ser71–Glu73. The active-site Proton acceptor is Asn74. Residues Trp75, Arg77, Arg191, and Arg197–Ser199 contribute to the substrate site. Glu210 contacts Mg(2+). Residues Gly241–Val263 form a disordered region. The span at Thr243–Val263 shows a compositional bias: polar residues.

The protein belongs to the UPP synthase family. Homodimer. The cofactor is Mg(2+).

Functionally, catalyzes the condensation of isopentenyl diphosphate (IPP) with allylic pyrophosphates generating different type of terpenoids. This is Isoprenyl transferase from Nitrosomonas europaea (strain ATCC 19718 / CIP 103999 / KCTC 2705 / NBRC 14298).